Reading from the N-terminus, the 493-residue chain is Alpha-amylase-related protein (493 aa).

An N-terminal signal peptide occupies residues 1-19 (MFKFALTLTLCLAGSLSLA). Q20 is modified (pyrrolidone carboxylic acid). A disulfide bridge connects residues C47 and C103. Positions 117, 168, and 177 each coordinate Ca(2+). A disulfide bond links C156 and C170. Chloride is bound at residue R205. The active-site Nucleophile is the D207. Residue H211 coordinates Ca(2+). E244 serves as the catalytic Proton donor. 2 residues coordinate chloride: N307 and R342. 3 cysteine pairs are disulfide-bonded: C375–C381, C417–C440, and C447–C459.

It belongs to the glycosyl hydrolase 13 family. Monomer. It depends on Ca(2+) as a cofactor. Requires chloride as cofactor. In terms of tissue distribution, midgut and fat body.

Its subcellular location is the secreted. It carries out the reaction Endohydrolysis of (1-&gt;4)-alpha-D-glucosidic linkages in polysaccharides containing three or more (1-&gt;4)-alpha-linked D-glucose units.. The polypeptide is Alpha-amylase-related protein (Amyrel) (Drosophila melanogaster (Fruit fly)).